The chain runs to 258 residues: Proteasome subunit beta type-1 (258 aa).

Belongs to the peptidase T1B family. The 26S proteasome consists of a 20S proteasome core and two 19S regulatory subunits. The 20S proteasome core is composed of 28 subunits that are arranged in four stacked rings, resulting in a barrel-shaped structure. The two end rings are each formed by seven alpha subunits, and the two central rings are each formed by seven beta subunits. The catalytic chamber with the active sites is on the inside of the barrel.

It is found in the cytoplasm. The protein resides in the nucleus. In terms of biological role, non-catalytic component of the proteasome, a multicatalytic proteinase complex which is characterized by its ability to cleave peptides with Arg, Phe, Tyr, Leu, and Glu adjacent to the leaving group at neutral or slightly basic pH. The proteasome has an ATP-dependent proteolytic activity. This chain is Proteasome subunit beta type-1 (pbs-6), found in Caenorhabditis elegans.